A 620-amino-acid polypeptide reads, in one-letter code: MALLQIAEPGQSAAPHQHRLAVGIDLGTTNSLVAAVRSGVTATLPDENGQHSLPSIVRYTQDGIEVGQVAALSSAQDPKNTIVSVKRFMGRSLTDIQSGEQAFPYQFEASENGLPLFVTPQGQVNPVQVSAEILRPLVERAEKTLGGELQGVVITVPAYFDDAQRQGTKDAASLLGVKVLRLLNEPTAAAIAYGLDSKQEGVIAIYDLGGGTFDISILRLNRGVFEVLATGGDSALGGDDFDHLLQAHMQQVWQLANIDSQLSRQLLIEARRVKEALTDASEVEASLTLADGTVLKQLVTKAEFDCLISALVKKTIASCRRTLRDAGVTADEVLETVMVGGSTRVPLVREQVEAFFGKAPLTSIDPDRVVAIGAAIQADILVGNKPESELLLLDVIPLSLGIETMGGLVEKVVSRNTTIPVARAQEFTTFKDGQTAMAFHVVQGERELVDDCRSLARFTLKGIPPLAAGAAHIRVTFQVDADGLLSVTAMEKSTGVQSSIQVKPSFGLSDTEIATMLKDSMKHAKEDISRRMLAEQQVEAARVLESLNAALAKDGDLLTSDERQQIDAVMAQLAEIARGDDADAIKQAIEVLDEHTQDFAAKRMDNSIRVAFKGQSIDNI.

Belongs to the heat shock protein 70 family.

Functionally, chaperone involved in the maturation of iron-sulfur cluster-containing proteins. Has a low intrinsic ATPase activity which is markedly stimulated by HscB. The sequence is that of Chaperone protein HscA homolog from Shewanella sp. (strain ANA-3).